The sequence spans 364 residues: tRNA 2-selenouridine synthase (364 aa).

The Rhodanese domain maps to Leu14–Ile137. Cys97 (S-selanylcysteine intermediate) is an active-site residue.

This sequence belongs to the SelU family. In terms of assembly, monomer.

The catalysed reaction is 5-methylaminomethyl-2-thiouridine(34) in tRNA + selenophosphate + (2E)-geranyl diphosphate + H2O + H(+) = 5-methylaminomethyl-2-selenouridine(34) in tRNA + (2E)-thiogeraniol + phosphate + diphosphate. It catalyses the reaction 5-methylaminomethyl-2-thiouridine(34) in tRNA + (2E)-geranyl diphosphate = 5-methylaminomethyl-S-(2E)-geranyl-thiouridine(34) in tRNA + diphosphate. The enzyme catalyses 5-methylaminomethyl-S-(2E)-geranyl-thiouridine(34) in tRNA + selenophosphate + H(+) = 5-methylaminomethyl-2-(Se-phospho)selenouridine(34) in tRNA + (2E)-thiogeraniol. It carries out the reaction 5-methylaminomethyl-2-(Se-phospho)selenouridine(34) in tRNA + H2O = 5-methylaminomethyl-2-selenouridine(34) in tRNA + phosphate. Its function is as follows. Involved in the post-transcriptional modification of the uridine at the wobble position (U34) of tRNA(Lys), tRNA(Glu) and tRNA(Gln). Catalyzes the conversion of 2-thiouridine (S2U-RNA) to 2-selenouridine (Se2U-RNA). Acts in a two-step process involving geranylation of 2-thiouridine (S2U) to S-geranyl-2-thiouridine (geS2U) and subsequent selenation of the latter derivative to 2-selenouridine (Se2U) in the tRNA chain. This Shigella sonnei (strain Ss046) protein is tRNA 2-selenouridine synthase.